The following is a 241-amino-acid chain: Fatty acid metabolism regulator protein (241 aa).

Residues 6–74 (KGPASFAEKY…HGKPTRVNNF (69 aa)) form the HTH gntR-type domain. The segment at residues 34-53 (ERELSELIGVTRTTLREVLQ) is a DNA-binding region (H-T-H motif).

In terms of assembly, homodimer.

It is found in the cytoplasm. Functionally, multifunctional regulator of fatty acid metabolism. The protein is Fatty acid metabolism regulator protein of Shewanella sp. (strain MR-4).